A 357-amino-acid chain; its full sequence is Protein RecA (357 aa).

67–74 is a binding site for ATP; sequence GPESSGKT. Residues 334–357 form a disordered region; sequence ELKPAAAGNSHDEDELAGEGKEEF.

It belongs to the RecA family.

The protein localises to the cytoplasm. Functionally, can catalyze the hydrolysis of ATP in the presence of single-stranded DNA, the ATP-dependent uptake of single-stranded DNA by duplex DNA, and the ATP-dependent hybridization of homologous single-stranded DNAs. It interacts with LexA causing its activation and leading to its autocatalytic cleavage. This is Protein RecA from Pectobacterium atrosepticum (strain SCRI 1043 / ATCC BAA-672) (Erwinia carotovora subsp. atroseptica).